Consider the following 323-residue polypeptide: Protein MEI2-like 6 (323 aa).

This Oryza sativa subsp. japonica (Rice) protein is Protein MEI2-like 6 (ML6).